A 456-amino-acid polypeptide reads, in one-letter code: D-glycerate 3-kinase, chloroplastic (456 aa).

The N-terminal 63 residues, 1–63 (MAVAISGSSL…KFNDHVVNPS (63 aa)), are a transit peptide targeting the chloroplast. ATP is bound at residue 215–222 (APQGCGKT).

The protein belongs to the GLYK kinase family.

Its subcellular location is the plastid. It localises to the chloroplast. The protein resides in the cytoplasm. It carries out the reaction (R)-glycerate + ATP = (2R)-3-phosphoglycerate + ADP + H(+). Its pathway is photosynthesis; photorespiration; 3-phospho-D-glycerate from glycine: step 4/4. In terms of biological role, catalyzes the concluding reaction of the photorespiratory C2 cycle, an indispensable ancillary metabolic pathway to the photosynthetic C3 cycle that enables land plants to grow in an oxygen-containing atmosphere. Its function is as follows. Cytoplasmic D-glycerate 3-kinase that constitutes a photorespiratory bypass that alleviates fluctuating light-induced photoinhibition. The sequence is that of D-glycerate 3-kinase, chloroplastic from Arabidopsis thaliana (Mouse-ear cress).